A 110-amino-acid chain; its full sequence is uncharacterized protein (110 aa).

Residues 29-49 (GLAFIFFFLVAFYFFPAFWDL) form a helical membrane-spanning segment.

The protein resides in the membrane. This is an uncharacterized protein from Saccharomyces cerevisiae (strain ATCC 204508 / S288c) (Baker's yeast).